The following is a 111-amino-acid chain: Cytochrome c (111 aa).

Ala1 carries the post-translational modification N-acetylalanine. 3 residues coordinate heme c: Cys22, Cys25, and His26. At Lys80 the chain carries N6,N6,N6-trimethyllysine. Met88 serves as a coordination point for heme c. Lys94 bears the N6,N6,N6-trimethyllysine mark.

The protein belongs to the cytochrome c family. Post-translationally, binds 1 heme c group covalently per subunit.

It is found in the mitochondrion intermembrane space. Electron carrier protein. The oxidized form of the cytochrome c heme group can accept an electron from the heme group of the cytochrome c1 subunit of cytochrome reductase. Cytochrome c then transfers this electron to the cytochrome oxidase complex, the final protein carrier in the mitochondrial electron-transport chain. This chain is Cytochrome c, found in Brassica napus (Rape).